We begin with the raw amino-acid sequence, 895 residues long: Probable inorganic carbon transporter subunit DabA 1 (895 aa).

C398, D400, H581, and C596 together coordinate Zn(2+).

The protein belongs to the inorganic carbon transporter (TC 9.A.2) DabA family. Forms a complex with DabB. Zn(2+) is required as a cofactor.

The protein localises to the cell inner membrane. Functionally, part of an energy-coupled inorganic carbon pump. This chain is Probable inorganic carbon transporter subunit DabA 1, found in Rhodopirellula baltica (strain DSM 10527 / NCIMB 13988 / SH1).